We begin with the raw amino-acid sequence, 202 residues long: uncharacterized protein (202 aa).

The region spanning 13–73 (ELAADRILDA…AYVHRETRRL (61 aa)) is the HTH tetR-type domain. The H-T-H motif DNA-binding region spans 36–55 (GMNEIAKAAGCSRATLYRYF).

This is an uncharacterized protein from Mycobacterium tuberculosis (strain CDC 1551 / Oshkosh).